A 222-amino-acid polypeptide reads, in one-letter code: uncharacterized protein (222 aa).

This is an uncharacterized protein from Homo sapiens (Human).